Consider the following 459-residue polypeptide: ATP-dependent protease ATPase subunit HslU (459 aa).

ATP is bound by residues V21, 63 to 68 (GVGKTE), D273, E338, and R410.

This sequence belongs to the ClpX chaperone family. HslU subfamily. A double ring-shaped homohexamer of HslV is capped on each side by a ring-shaped HslU homohexamer. The assembly of the HslU/HslV complex is dependent on binding of ATP.

It localises to the cytoplasm. Functionally, ATPase subunit of a proteasome-like degradation complex; this subunit has chaperone activity. The binding of ATP and its subsequent hydrolysis by HslU are essential for unfolding of protein substrates subsequently hydrolyzed by HslV. HslU recognizes the N-terminal part of its protein substrates and unfolds these before they are guided to HslV for hydrolysis. The polypeptide is ATP-dependent protease ATPase subunit HslU (Thermosipho africanus (strain TCF52B)).